Reading from the N-terminus, the 614-residue chain is Probable pectinesterase/pectinesterase inhibitor 13 (614 aa).

The helical transmembrane segment at Ile25–Ala45 threads the bilayer. Residues Gln55–Pro102 form a disordered region. 7 N-linked (GlcNAc...) asparagine glycosylation sites follow: Asn66, Asn128, Asn197, Asn243, Asn301, Asn351, and Asn367. Positions Gly103–Leu255 are pectinesterase inhibitor 13. The tract at residues Asn301–Asp598 is pectinesterase 13. Thr376 and Gln406 together coordinate substrate. Asp429 (proton donor; for pectinesterase activity) is an active-site residue. Cysteines 443 and 463 form a disulfide. The Nucleophile; for pectinesterase activity role is filled by Asp450. 2 residues coordinate substrate: Arg518 and Trp520. Residues Asn522 and Asn588 are each glycosylated (N-linked (GlcNAc...) asparagine).

It in the N-terminal section; belongs to the PMEI family. This sequence in the C-terminal section; belongs to the pectinesterase family. Expressed in flower buds.

Its subcellular location is the membrane. It catalyses the reaction [(1-&gt;4)-alpha-D-galacturonosyl methyl ester](n) + n H2O = [(1-&gt;4)-alpha-D-galacturonosyl](n) + n methanol + n H(+). It functions in the pathway glycan metabolism; pectin degradation; 2-dehydro-3-deoxy-D-gluconate from pectin: step 1/5. Its function is as follows. Acts in the modification of cell walls via demethylesterification of cell wall pectin. This Arabidopsis thaliana (Mouse-ear cress) protein is Probable pectinesterase/pectinesterase inhibitor 13 (PME13).